The sequence spans 578 residues: mRNA-decapping enzyme 1B (578 aa).

Position 2 is an N-acetylalanine (A2). S144 and S145 each carry phosphoserine. 2 disordered regions span residues 187 to 222 (AICDNPKLIKPVPVRPSSSQRLQGPAPSKTSDPEPQ) and 246 to 265 (RTFAHHHHHHHQQQQETRPV). Residues 248 to 257 (FAHHHHHHHQ) are compositionally biased toward basic residues. S274 and S335 each carry phosphoserine. T380 bears the Phosphothreonine mark.

The protein belongs to the DCP1 family. Interacts with DCP1A.

Its subcellular location is the cytoplasm. It is found in the nucleus. It catalyses the reaction a 5'-end (N(7)-methyl 5'-triphosphoguanosine)-ribonucleoside in mRNA + H2O = N(7)-methyl-GDP + a 5'-end phospho-ribonucleoside in mRNA + 2 H(+). May play a role in the degradation of mRNAs, both in normal mRNA turnover and in nonsense-mediated mRNA decay. May remove the 7-methyl guanine cap structure from mRNA molecules, yielding a 5'-phosphorylated mRNA fragment and 7m-GDP. This is mRNA-decapping enzyme 1B (Dcp1b) from Mus musculus (Mouse).